Reading from the N-terminus, the 67-residue chain is Bombesin (67 aa).

Positions 1-30 are cleaved as a signal peptide; that stretch reads MSLLPAVKVLPLGYLGIVLVFSLILRSAMV. Positions 31–49 are excised as a propeptide; it reads DFIQDAGKLERIDTYKREA. Q50 bears the Pyrrolidone carboxylic acid mark. Residue M64 is modified to Methionine amide.

This sequence belongs to the bombesin/neuromedin-B/ranatensin family. Expressed by the skin dorsal glands.

It localises to the secreted. Functionally, stimulates smooth muscle contraction in isolated rat stomach strip. This is Bombesin from Sanguirana varians (Palawan frog).